The primary structure comprises 684 residues: Dipeptidyl-peptidase 5 (684 aa).

The first 24 residues, 1–24 (MNKKIFSMMAASIIGSAAMTPSAG), serve as a signal peptide directing secretion. 3 WD repeats span residues 87–127 (DTES…TERR), 220–259 (KPWSGIEDFSWSPDGQNIAYASRKKTGMAYSLSTNSDIYI), and 323–363 (TFDY…GKIR). Residues Ser542, Asp627, and His659 each act as charge relay system in the active site.

This sequence belongs to the peptidase S9C family. As to quaternary structure, homodimer.

The protein resides in the periplasm. Catalyzes the removal of dipeptides from the N-terminus of oligopeptides. Prefers Ala and hydrophobic residues except Pro at the P1 position, and has no preference for P2 residues. Shows high dipeptidyl peptidase activity toward the synthetic substrates Lys-Ala-, Gly-Phe-, Met-Leu-, and Ser-Tyr-methylcoumaryl-7-amide (MCA), and slowly hydrolyzes Val-Tyr-MCA. Is likely involved in amino acid metabolism and bacterial growth of asaccharolytic P.gingivalis, that utilizes amino acids from extracellular proteinaceous nutrients as energy and carbon sources. The protein is Dipeptidyl-peptidase 5 of Porphyromonas gingivalis (strain ATCC 33277 / DSM 20709 / CIP 103683 / JCM 12257 / NCTC 11834 / 2561).